The primary structure comprises 201 residues: Dephospho-CoA kinase (201 aa).

The DPCK domain maps to 3-201; sequence ILGLTGGIGS…QIDSRVGCKI (199 aa). Position 11–16 (11–16) interacts with ATP; it reads GSGKSL.

Belongs to the CoaE family.

The protein resides in the cytoplasm. The enzyme catalyses 3'-dephospho-CoA + ATP = ADP + CoA + H(+). It participates in cofactor biosynthesis; coenzyme A biosynthesis; CoA from (R)-pantothenate: step 5/5. Functionally, catalyzes the phosphorylation of the 3'-hydroxyl group of dephosphocoenzyme A to form coenzyme A. In Ehrlichia ruminantium (strain Welgevonden), this protein is Dephospho-CoA kinase.